We begin with the raw amino-acid sequence, 122 residues long: Large ribosomal subunit protein uL14 (122 aa).

It belongs to the universal ribosomal protein uL14 family. In terms of assembly, part of the 50S ribosomal subunit. Forms a cluster with proteins L3 and L19. In the 70S ribosome, L14 and L19 interact and together make contacts with the 16S rRNA in bridges B5 and B8.

Its function is as follows. Binds to 23S rRNA. Forms part of two intersubunit bridges in the 70S ribosome. This Paramagnetospirillum magneticum (strain ATCC 700264 / AMB-1) (Magnetospirillum magneticum) protein is Large ribosomal subunit protein uL14.